Reading from the N-terminus, the 260-residue chain is Exosome complex component Rrp42 (260 aa).

It belongs to the RNase PH family. Rrp42 subfamily. Component of the archaeal exosome complex. Forms a hexameric ring-like arrangement composed of 3 Rrp41-Rrp42 heterodimers. The hexameric ring associates with a trimer of Rrp4 and/or Csl4 subunits.

Its subcellular location is the cytoplasm. Functionally, non-catalytic component of the exosome, which is a complex involved in RNA degradation. Contributes to the structuring of the Rrp41 active site. The protein is Exosome complex component Rrp42 of Methanocella arvoryzae (strain DSM 22066 / NBRC 105507 / MRE50).